The primary structure comprises 432 residues: D-amino acid dehydrogenase (432 aa).

3 to 17 (VLVLGSGVVGTASAY) provides a ligand contact to FAD.

This sequence belongs to the DadA oxidoreductase family. The cofactor is FAD.

The catalysed reaction is a D-alpha-amino acid + A + H2O = a 2-oxocarboxylate + AH2 + NH4(+). It functions in the pathway amino-acid degradation; D-alanine degradation; NH(3) and pyruvate from D-alanine: step 1/1. Functionally, oxidative deamination of D-amino acids. The sequence is that of D-amino acid dehydrogenase from Stutzerimonas stutzeri (strain A1501) (Pseudomonas stutzeri).